The chain runs to 166 residues: Large ribosomal subunit protein uL10 (166 aa).

Belongs to the universal ribosomal protein uL10 family. In terms of assembly, part of the ribosomal stalk of the 50S ribosomal subunit. The N-terminus interacts with L11 and the large rRNA to form the base of the stalk. The C-terminus forms an elongated spine to which L12 dimers bind in a sequential fashion forming a multimeric L10(L12)X complex.

Its function is as follows. Forms part of the ribosomal stalk, playing a central role in the interaction of the ribosome with GTP-bound translation factors. This Lactobacillus johnsonii (strain CNCM I-12250 / La1 / NCC 533) protein is Large ribosomal subunit protein uL10.